A 263-amino-acid chain; its full sequence is Ribosomal RNA large subunit methyltransferase E (263 aa).

The S-adenosyl-L-methionine site is built by Gly50, Trp52, Asp68, Asn84, and Asp109. Catalysis depends on Lys149, which acts as the Proton acceptor. A TRAM domain is found at Pro196–Glu254.

It belongs to the class I-like SAM-binding methyltransferase superfamily. RNA methyltransferase RlmE family.

Its subcellular location is the cytoplasm. It catalyses the reaction uridine(2552) in 23S rRNA + S-adenosyl-L-methionine = 2'-O-methyluridine(2552) in 23S rRNA + S-adenosyl-L-homocysteine + H(+). Functionally, specifically methylates the uridine in position 2552 of 23S rRNA at the 2'-O position of the ribose in the fully assembled 50S ribosomal subunit. The sequence is that of Ribosomal RNA large subunit methyltransferase E from Methanosarcina barkeri (strain Fusaro / DSM 804).